Reading from the N-terminus, the 280-residue chain is MAAKKDYYAILGVPRNATQEEIKRAYKRLARQYHPDVNKSPEAEEKFKEINEAYAVLSDPEKRRIYDTYGTTEAPPPPPPGGYDFSGFDVEDFSEFFQELFGPGLFGGFGRRSRKGRDLRAELPLTLEEAFHGGERVVEVAGRRVSVRIPPGVREGSVIRVPGMGGQGNPPGDLLLVVRLLPHPVFRLEGQDLYATLDVPAPIAVVGGKVRAMTLEGPVEVAVPPRTQAGRKLRLKGKGFPGPAGRGDLYLEVRITIPERLTPEEEALWKKLAEAYYARA.

Positions 6–70 (DYYAILGVPR…EKRRIYDTYG (65 aa)) constitute a J domain.

This sequence belongs to the DnaJ family. Forms a heterononamer with DnaJ and DafA in the resting state. Three copies of each protein are present in the complex.

It localises to the cytoplasm. Functionally, does not influence ATP binding or hydrolysis nor ADP release. Exerts influence on the interaction of DnaK with substrates; in the presence of DafA, DnaJ inhibits substrate binding, and substrate already bound to DnaK is displaced by DnaJ and DafA. This is Chaperone protein DnaJ 2 (dnaJ2) from Thermus thermophilus (strain ATCC 27634 / DSM 579 / HB8).